Reading from the N-terminus, the 192-residue chain is UPF0462 protein C4orf33 homolog (192 aa).

Belongs to the UPF0462 family.

This Mus musculus (Mouse) protein is UPF0462 protein C4orf33 homolog (D3Ertd751e).